The primary structure comprises 214 residues: Probable chemoreceptor glutamine deamidase CheD (214 aa).

Belongs to the CheD family.

It catalyses the reaction L-glutaminyl-[protein] + H2O = L-glutamyl-[protein] + NH4(+). Its function is as follows. Probably deamidates glutamine residues to glutamate on methyl-accepting chemotaxis receptors (MCPs), playing an important role in chemotaxis. In Vibrio vulnificus (strain YJ016), this protein is Probable chemoreceptor glutamine deamidase CheD.